Consider the following 112-residue polypeptide: Virion protein 6 (112 aa).

It localises to the virion. The polypeptide is Virion protein 6 (Enterococcus phage phiEF24C (Enterococcus bacteriophage phi-EF24C)).